The primary structure comprises 600 residues: UvrABC system protein C (600 aa).

One can recognise a GIY-YIG domain in the interval 15–100 (NSTGVYQYFN…IKQLHPKYNI (86 aa)). Residues 203–238 (SVLLKNLEKQMLVLAQNENYEEAAKVRDQIAMIKDL) form the UVR domain.

This sequence belongs to the UvrC family. Interacts with UvrB in an incision complex.

The protein localises to the cytoplasm. In terms of biological role, the UvrABC repair system catalyzes the recognition and processing of DNA lesions. UvrC both incises the 5' and 3' sides of the lesion. The N-terminal half is responsible for the 3' incision and the C-terminal half is responsible for the 5' incision. The sequence is that of UvrABC system protein C from Campylobacter jejuni subsp. jejuni serotype O:2 (strain ATCC 700819 / NCTC 11168).